Consider the following 1141-residue polypeptide: MAVRGEAAQDWAKPGLRGPSPAPVARGDHRCRGGSPSSPRGSGCCWRALALQPLRRSPQLSSALCAGSLSVLLALLVRLVGGEVGGELESSQEAAAEEEEEEGARGGVFPGPRGGAPGGGAQLSPWLQPAALLFSLLCAFFWMGLCLLRAGVRLPLAVALLAACCAGEALVQLSLGVGDGRLLSLPAAGVLLSCLGGATWLVLRLRLGVLMVALTSALRTVALVSLERFKVAWRPYLAYLAAVLGLLLARYAEQLLPQCSGPAPPRERFGSQSSARTKEEIPGWKRRRRSSSVVAGEMSGCGGKSHRRTSLPCIPREQLMGHSEWDHKRGSRGSQSGTSVTVDIAVMGEAHGLITDLLADPSLPPNVCTSLRAVSNLLSTQLTFQAIHKPRVNPTVTFSENYTCSDSEEGLEKDKLAIPKRLRRSLPPGLLRRVSSTWTTTTSATGLPTLEPAPVRRDRSASIKPHEAPSPSAVNPDSWNAPVLMTLTKSRSFTSSYAVSAANHVKAKKQNRPGGLDKISPVPSPSSSPPQGSPTSSPVSGIASVQFPESPEVTTKRGPGSHRALTYTQSAPDLSPQIPPSPVICSSCGRPYSQGNPADGPSERSGPAMQKPNRTDDTSQVTSDYETNNNSDSSDILQNDEEAECQREPLRKASACGTYTPQTMIFLDKPILAPEPLVMDNLDSIMDQLNTWNFPIFDLVENIGRKCGRILSQVSYRLFEDMGLFEAFKIPVREFMNYFHALEIGYRDIPYHNRIHATDVLHAVWYLTTQPIPGLPSVIGDHGSASDSDSDSGFTHGHMGYVFSKAYHVPDDKYGCLSGNIPALELMALYVAAAMHDYDHPGRTNAFLVATSAPQAVLYNDRSVLENHHAAAAWNLFMSRPEYNFLVNLDHVEFKHFRFLVIEAILATDLKKHFDFVAKFNAKVNDDVGIDWTNENDRLLVCQMCIKLADINGPAKCKDLHLRWTEGIASEFYEQGDEEASLGLPISPFMDRSAPQLANLQESFISHIVGPLCHSYDSAGLMPGKWVDDSDDSGDTDDPEEEEEEAETPHEEETCENSEAPRKKSFKRRRIYCQITQHLLQNHMMWKKVIEEEQCLSGTENQAPDQAPLQHSSEQIQAIKEEEEEKGKPRAEETLAPQPDL.

A disordered region spans residues 1 to 41 (MAVRGEAAQDWAKPGLRGPSPAPVARGDHRCRGGSPSSPRG). The chain crosses the membrane as a helical span at residues 62–82 (SALCAGSLSVLLALLVRLVGG). The tract at residues 89–111 (ESSQEAAAEEEEEEGARGGVFPG) is disordered. The next 5 helical transmembrane spans lie at 127-147 (LQPA…GLCL), 157-177 (AVAL…SLGV), 182-202 (LLSL…TWLV), 207-227 (LGVL…VSLE), and 229-249 (FKVA…LLLA). The tract at residues 262–309 (PAPPRERFGSQSSARTKEEIPGWKRRRRSSSVVAGEMSGCGGKSHRRT) is disordered. Ser-310 carries the phosphoserine modification. Positions 433 to 445 (RVSSTWTTTTSAT) are enriched in low complexity. The segment at 433–479 (RVSSTWTTTTSATGLPTLEPAPVRRDRSASIKPHEAPSPSAVNPDSW) is disordered. Residues 454-467 (PVRRDRSASIKPHE) show a composition bias toward basic and acidic residues. Phosphoserine is present on residues Ser-492, Ser-520, Ser-524, and Ser-533. Residues 504–643 (HVKAKKQNRP…SDILQNDEEA (140 aa)) form a disordered region. Pro residues predominate over residues 522–532 (VPSPSSSPPQG). The span at 618–637 (TSQVTSDYETNNNSDSSDIL) shows a compositional bias: polar residues. The interval 669–1141 (KPILAPEPLV…EETLAPQPDL (473 aa)) is interaction with SLFN12. One can recognise a PDEase domain in the interval 674 to 1093 (PEPLVMDNLD…MMWKKVIEEE (420 aa)). The active-site Proton donor is His-752. Position 752 (His-752) interacts with AMP. Residues His-756, His-836, Asp-837, and Asp-950 each coordinate Mn(2+). Residues Asp-837, Asp-950, and Gln-1001 each coordinate AMP. Asp-837 contributes to the Mg(2+) binding site. 2 disordered regions span residues 1024-1062 (GKWV…EAPR) and 1098-1141 (GTEN…QPDL). Over residues 1029–1046 (DSDDSGDTDDPEEEEEEA) the composition is skewed to acidic residues. Position 1033 is a phosphoserine (Ser-1033). Residue Thr-1036 is modified to Phosphothreonine. The span at 1098 to 1113 (GTENQAPDQAPLQHSS) shows a compositional bias: polar residues. Residue Lys-1120 forms a Glycyl lysine isopeptide (Lys-Gly) (interchain with G-Cter in SUMO2) linkage.

Belongs to the cyclic nucleotide phosphodiesterase family. PDE3 subfamily. As to quaternary structure, homodimer. Interacts with PDE3A; direct low affinity interaction which is stimulated by binding of 17beta-estradiol/E2 to PDE3A and that positively regulates the ribonuclease activity of SLFN12. It depends on Mn(2+) as a cofactor. The cofactor is Mg(2+).

The protein localises to the membrane. The protein resides in the cytoplasm. Its subcellular location is the cytosol. The catalysed reaction is a nucleoside 3',5'-cyclic phosphate + H2O = a nucleoside 5'-phosphate + H(+). It carries out the reaction 3',5'-cyclic AMP + H2O = AMP + H(+). The enzyme catalyses 3',5'-cyclic GMP + H2O = GMP + H(+). It catalyses the reaction 3',5'-cyclic UMP + H2O = UMP + H(+). Cyclic nucleotide phosphodiesterase with specificity for the second messengers cAMP and cGMP, which are key regulators of many important physiological processes. Also has activity toward cUMP. Independently of its catalytic activity it is part of an E2/17beta-estradiol-induced pro-apoptotic signaling pathway. E2 stabilizes the PDE3A/SLFN12 complex in the cytosol, promoting the dephosphorylation of SLFN12 and activating its pro-apoptotic ribosomal RNA/rRNA ribonuclease activity. This apoptotic pathway might be relevant in tissues with high concentration of E2 and be for instance involved in placenta remodeling. This chain is cGMP-inhibited 3',5'-cyclic phosphodiesterase 3A, found in Rattus norvegicus (Rat).